Reading from the N-terminus, the 199-residue chain is Protein-methionine-sulfoxide reductase heme-binding subunit MsrQ (199 aa).

Transmembrane regions (helical) follow at residues 13–33, 79–99, 120–140, 147–167, and 169–189; these read VLLH…VDQG, LLGL…ALLE, LGII…QIMM, WQKL…HYLW, and VKTL…LLLL.

Belongs to the MsrQ family. Heterodimer of a catalytic subunit (MsrP) and a heme-binding subunit (MsrQ). It depends on FMN as a cofactor. Requires heme b as cofactor.

It is found in the cell inner membrane. Part of the MsrPQ system that repairs oxidized periplasmic proteins containing methionine sulfoxide residues (Met-O), using respiratory chain electrons. Thus protects these proteins from oxidative-stress damage caused by reactive species of oxygen and chlorine generated by the host defense mechanisms. MsrPQ is essential for the maintenance of envelope integrity under bleach stress, rescuing a wide series of structurally unrelated periplasmic proteins from methionine oxidation. MsrQ provides electrons for reduction to the reductase catalytic subunit MsrP, using the quinone pool of the respiratory chain. The polypeptide is Protein-methionine-sulfoxide reductase heme-binding subunit MsrQ (Pectobacterium atrosepticum (strain SCRI 1043 / ATCC BAA-672) (Erwinia carotovora subsp. atroseptica)).